The chain runs to 72 residues: Translation initiation factor IF-1 (72 aa).

The S1-like domain maps to 1–72 (MAKEEAITVD…SKGRITYRKK (72 aa)).

The protein belongs to the IF-1 family. Component of the 30S ribosomal translation pre-initiation complex which assembles on the 30S ribosome in the order IF-2 and IF-3, IF-1 and N-formylmethionyl-tRNA(fMet); mRNA recruitment can occur at any time during PIC assembly.

It is found in the cytoplasm. In terms of biological role, one of the essential components for the initiation of protein synthesis. Stabilizes the binding of IF-2 and IF-3 on the 30S subunit to which N-formylmethionyl-tRNA(fMet) subsequently binds. Helps modulate mRNA selection, yielding the 30S pre-initiation complex (PIC). Upon addition of the 50S ribosomal subunit IF-1, IF-2 and IF-3 are released leaving the mature 70S translation initiation complex. This is Translation initiation factor IF-1 from Leptospira borgpetersenii serovar Hardjo-bovis (strain L550).